The sequence spans 371 residues: Queuine tRNA-ribosyltransferase (371 aa).

Catalysis depends on Asp90, which acts as the Proton acceptor. Residues 90–94 (DSGGF), Asp144, Gln188, and Gly215 each bind substrate. An RNA binding region spans residues 246–252 (GVGTPED). The Nucleophile role is filled by Asp265. The segment at 270–274 (TRNAR) is RNA binding; important for wobble base 34 recognition. Residues Cys303, Cys305, Cys308, and His334 each contribute to the Zn(2+) site.

Belongs to the queuine tRNA-ribosyltransferase family. As to quaternary structure, homodimer. Within each dimer, one monomer is responsible for RNA recognition and catalysis, while the other monomer binds to the replacement base PreQ1. The cofactor is Zn(2+).

It carries out the reaction 7-aminomethyl-7-carbaguanine + guanosine(34) in tRNA = 7-aminomethyl-7-carbaguanosine(34) in tRNA + guanine. It participates in tRNA modification; tRNA-queuosine biosynthesis. Catalyzes the base-exchange of a guanine (G) residue with the queuine precursor 7-aminomethyl-7-deazaguanine (PreQ1) at position 34 (anticodon wobble position) in tRNAs with GU(N) anticodons (tRNA-Asp, -Asn, -His and -Tyr). Catalysis occurs through a double-displacement mechanism. The nucleophile active site attacks the C1' of nucleotide 34 to detach the guanine base from the RNA, forming a covalent enzyme-RNA intermediate. The proton acceptor active site deprotonates the incoming PreQ1, allowing a nucleophilic attack on the C1' of the ribose to form the product. After dissociation, two additional enzymatic reactions on the tRNA convert PreQ1 to queuine (Q), resulting in the hypermodified nucleoside queuosine (7-(((4,5-cis-dihydroxy-2-cyclopenten-1-yl)amino)methyl)-7-deazaguanosine). The sequence is that of Queuine tRNA-ribosyltransferase from Neisseria gonorrhoeae (strain ATCC 700825 / FA 1090).